The following is a 426-amino-acid chain: Serine--tRNA ligase (426 aa).

An L-serine-binding site is contributed by 233 to 235 (TSE). 264–266 (RAE) lines the ATP pocket. Position 287 (Glu-287) interacts with L-serine. 351 to 354 (EISS) is an ATP binding site. Ser-387 serves as a coordination point for L-serine.

Belongs to the class-II aminoacyl-tRNA synthetase family. Type-1 seryl-tRNA synthetase subfamily. In terms of assembly, homodimer. The tRNA molecule binds across the dimer.

It localises to the cytoplasm. It carries out the reaction tRNA(Ser) + L-serine + ATP = L-seryl-tRNA(Ser) + AMP + diphosphate + H(+). It catalyses the reaction tRNA(Sec) + L-serine + ATP = L-seryl-tRNA(Sec) + AMP + diphosphate + H(+). Its pathway is aminoacyl-tRNA biosynthesis; selenocysteinyl-tRNA(Sec) biosynthesis; L-seryl-tRNA(Sec) from L-serine and tRNA(Sec): step 1/1. Its function is as follows. Catalyzes the attachment of serine to tRNA(Ser). Is also able to aminoacylate tRNA(Sec) with serine, to form the misacylated tRNA L-seryl-tRNA(Sec), which will be further converted into selenocysteinyl-tRNA(Sec). This Stenotrophomonas maltophilia (strain R551-3) protein is Serine--tRNA ligase.